We begin with the raw amino-acid sequence, 398 residues long: Subtilisin-like protease CPC735_050320 (398 aa).

The first 19 residues, 1–19, serve as a signal peptide directing secretion; that stretch reads MVFLGKILPLALAALSVNG. Residues 20 to 117 constitute a propeptide that is removed on maturation; the sequence is AEILSAPGAE…IERDQIMKAS (98 aa). The Inhibitor I9 domain maps to 35–115; that stretch reads YIVVMKEGTS…AYIERDQIMK (81 aa). Residues 127-398 form the Peptidase S8 domain; the sequence is SWGLARVSSR…NRLINNGVSQ (272 aa). Active-site charge relay system residues include Asp159 and His190. N-linked (GlcNAc...) asparagine glycosylation is found at Asn220 and Asn250. Catalysis depends on Ser344, which acts as the Charge relay system.

This sequence belongs to the peptidase S8 family.

Its subcellular location is the secreted. Its function is as follows. Secreted subtilisin-like serine protease with keratinolytic activity that contributes to pathogenicity. The chain is Subtilisin-like protease CPC735_050320 from Coccidioides posadasii (strain C735) (Valley fever fungus).